Here is a 446-residue protein sequence, read N- to C-terminus: Probable rhamnogalacturonase A (446 aa).

A signal peptide spans 1 to 18; the sequence is MPALPILALALAPLLVNG. A disulfide bond links Cys-39 and Cys-65. Residues Asn-50, Asn-115, and Asn-124 are each glycosylated (N-linked (GlcNAc...) asparagine). The active-site Proton donor is the Asp-216. The cysteines at positions 218 and 235 are disulfide-linked. Residues Asn-236 and Asn-281 are each glycosylated (N-linked (GlcNAc...) asparagine). His-291 is an active-site residue. Asn-318 is a glycosylation site (N-linked (GlcNAc...) asparagine). Intrachain disulfides connect Cys-341/Cys-347 and Cys-369/Cys-378.

The protein belongs to the glycosyl hydrolase 28 family.

It is found in the secreted. The enzyme catalyses Endohydrolysis of alpha-D-GalA-(1-&gt;2)-alpha-L-Rha glycosidic bond in the rhamnogalacturonan I backbone with initial inversion of anomeric configuration releasing oligosaccharides with beta-D-GalA at the reducing end.. Its function is as follows. Pectinolytic enzymes consist of four classes of enzymes: pectine lyase, polygalacturonase, pectin methylesterase and rhamnogalacturonase. Hydrolyzes alpha-D-galacturonopyranosyl-(1,2)-alpha-L-rhamnopyranosyl linkages in the backbone of the hairy regions of pectins. This is Probable rhamnogalacturonase A (rhgA) from Aspergillus niger (strain ATCC MYA-4892 / CBS 513.88 / FGSC A1513).